A 204-amino-acid polypeptide reads, in one-letter code: FMN-dependent NADH:quinone oxidoreductase (204 aa).

FMN-binding positions include Ser9 and 15-17 (SAS).

The protein belongs to the azoreductase type 1 family. As to quaternary structure, homodimer. FMN is required as a cofactor.

It carries out the reaction 2 a quinone + NADH + H(+) = 2 a 1,4-benzosemiquinone + NAD(+). The enzyme catalyses N,N-dimethyl-1,4-phenylenediamine + anthranilate + 2 NAD(+) = 2-(4-dimethylaminophenyl)diazenylbenzoate + 2 NADH + 2 H(+). Quinone reductase that provides resistance to thiol-specific stress caused by electrophilic quinones. Its function is as follows. Also exhibits azoreductase activity. Catalyzes the reductive cleavage of the azo bond in aromatic azo compounds to the corresponding amines. In Xanthomonas campestris pv. campestris (strain ATCC 33913 / DSM 3586 / NCPPB 528 / LMG 568 / P 25), this protein is FMN-dependent NADH:quinone oxidoreductase.